The following is a 381-amino-acid chain: Homoserine O-succinyltransferase (381 aa).

An AB hydrolase-1 domain is found at 45–360; it reads NAVLVCHALN…PHGHDAFLLD (316 aa). Serine 151 acts as the Nucleophile in catalysis. Substrate is bound at residue arginine 221. Catalysis depends on residues aspartate 321 and histidine 354. Aspartate 355 is a binding site for substrate.

Belongs to the AB hydrolase superfamily. MetX family. As to quaternary structure, homodimer.

It is found in the cytoplasm. It carries out the reaction L-homoserine + succinyl-CoA = O-succinyl-L-homoserine + CoA. Its pathway is amino-acid biosynthesis; L-methionine biosynthesis via de novo pathway; O-succinyl-L-homoserine from L-homoserine: step 1/1. Its function is as follows. Transfers a succinyl group from succinyl-CoA to L-homoserine, forming succinyl-L-homoserine. This chain is Homoserine O-succinyltransferase, found in Paraburkholderia xenovorans (strain LB400).